The sequence spans 301 residues: Oxaloacetate tautomerase YisK (301 aa).

Lys99 is a binding site for oxalate. Residues Glu148, Glu150, and Asp179 each coordinate Mn(2+). The oxalate site is built by Lys196 and Thr266.

This sequence belongs to the FAH family. Homodimer. It depends on Mg(2+) as a cofactor. Mn(2+) is required as a cofactor.

The protein resides in the cytoplasm. The enzyme catalyses oxaloacetate = enol-oxaloacetate. The catalysed reaction is oxaloacetate + H(+) = pyruvate + CO2. In terms of biological role, tautomerase that converts enol-oxaloacetate to the keto form of oxaloacetate. Also shows weak oxaloacetate decarboxylase (ODx), catalyzing the decarboxylation of oxaloacetate (OAA) to pyruvate and CO(2). The polypeptide is Oxaloacetate tautomerase YisK (Bacillus subtilis (strain 168)).